The primary structure comprises 342 residues: ATP-dependent (S)-NAD(P)H-hydrate dehydratase (342 aa).

One can recognise a YjeF C-terminal domain in the interval 11-337 (ILPALEKVVP…EYLGHRLFTF (327 aa)). Residues G127 and 180 to 186 (NVMEHKR) each bind (6S)-NADPHX. ATP is bound by residues 229–233 (KGKTD) and 248–257 (GSPRRCGGQG). Position 258 (D258) interacts with (6S)-NADPHX.

The protein belongs to the NnrD/CARKD family. Requires Mg(2+) as cofactor.

It catalyses the reaction (6S)-NADHX + ATP = ADP + phosphate + NADH + H(+). The catalysed reaction is (6S)-NADPHX + ATP = ADP + phosphate + NADPH + H(+). In terms of biological role, catalyzes the dehydration of the S-form of NAD(P)HX at the expense of ATP, which is converted to ADP. Together with NAD(P)HX epimerase, which catalyzes the epimerization of the S- and R-forms, the enzyme allows the repair of both epimers of NAD(P)HX, a damaged form of NAD(P)H that is a result of enzymatic or heat-dependent hydration. The chain is ATP-dependent (S)-NAD(P)H-hydrate dehydratase from Physcomitrium patens (Spreading-leaved earth moss).